Here is a 209-residue protein sequence, read N- to C-terminus: Type III pantothenate kinase (209 aa).

5–12 contacts ATP; the sequence is DIGNSNAN. Substrate-binding positions include Y68 and 72 to 75; that span reads GIDR. Residue D74 is the Proton acceptor of the active site. Residue D89 coordinates K(+). Residue S92 coordinates ATP. Substrate is bound at residue T144.

The protein belongs to the type III pantothenate kinase family. Homodimer. It depends on NH4(+) as a cofactor. The cofactor is K(+).

It is found in the cytoplasm. It carries out the reaction (R)-pantothenate + ATP = (R)-4'-phosphopantothenate + ADP + H(+). The protein operates within cofactor biosynthesis; coenzyme A biosynthesis; CoA from (R)-pantothenate: step 1/5. Catalyzes the phosphorylation of pantothenate (Pan), the first step in CoA biosynthesis. In Campylobacter jejuni (strain RM1221), this protein is Type III pantothenate kinase.